Reading from the N-terminus, the 166-residue chain is UPF0304 protein VV1_2093 (166 aa).

It belongs to the UPF0304 family.

The sequence is that of UPF0304 protein VV1_2093 from Vibrio vulnificus (strain CMCP6).